Reading from the N-terminus, the 172-residue chain is MRALIFGRFQPFHKGHLSIVKWAFERGYSELVFLVGMASENYTPRNPFTAGERIEMIRLSFLDAGLPLEKAITATIRTLETSIGSVYYVLSYVPRVDTILTRNPVIAKIFLDAGVNVERPPLFNRDEWRGEKIRMWIARGDDRWRSTVTPSTARFIEEIGGVERIRWSLASD.

The protein belongs to the archaeal NMN adenylyltransferase family.

This is an uncharacterized protein from Aeropyrum pernix (strain ATCC 700893 / DSM 11879 / JCM 9820 / NBRC 100138 / K1).